Reading from the N-terminus, the 501-residue chain is Cytochrome P450 90A4 (501 aa).

A helical transmembrane segment spans residues 2–22 (AAAALLLLAAAAAAVVVAMAL). Position 446 (cysteine 446) interacts with heme.

It belongs to the cytochrome P450 family. It depends on heme as a cofactor.

Its subcellular location is the membrane. The protein operates within plant hormone biosynthesis; brassinosteroid biosynthesis. Its function is as follows. Catalyzes the C23-alpha-hydroxylation step in brassinosteroid biosynthesis. Converts 6-deoxocathasterone to 6-deoxoteasterone in the late C6-oxidation pathway and cathasterone to teasterone (TE) in the early C6-oxidation pathway of brassinolide (BL) biosynthesis. The chain is Cytochrome P450 90A4 from Oryza sativa subsp. indica (Rice).